A 160-amino-acid polypeptide reads, in one-letter code: Small ribosomal subunit protein uS7 (160 aa).

Belongs to the universal ribosomal protein uS7 family. In terms of assembly, part of the 30S ribosomal subunit. Contacts proteins S9 and S11.

Functionally, one of the primary rRNA binding proteins, it binds directly to 16S rRNA where it nucleates assembly of the head domain of the 30S subunit. Is located at the subunit interface close to the decoding center, probably blocks exit of the E-site tRNA. The polypeptide is Small ribosomal subunit protein uS7 (Ehrlichia canis (strain Jake)).